The following is a 1337-amino-acid chain: Partitioning defective 3 homolog (1337 aa).

Serine 25 carries the post-translational modification Phosphoserine. 2 disordered regions span residues 81–109 (EQDPHHGGDGTSASSTGTQSPEIFGSELG) and 143–263 (SSDP…LENM). At threonine 91 the chain carries Phosphothreonine. The segment covering 91–100 (TSASSTGTQS) has biased composition (low complexity). Polar residues-rich tracts occupy residues 150 to 163 (GLSTSVSDNNFSSE) and 171 to 188 (TRWSTTAGFLKQNTTGSP). Phosphoserine occurs at positions 156 and 174. The segment covering 190–203 (TCDRKKDENYRSLP) has biased composition (basic and acidic residues). Residues 207 to 224 (SSWSNQFQRDNARSSLSA) show a composition bias toward polar residues. Residues 271–359 (MVKLVQVPND…ARVIWFHVVP (89 aa)) form the PDZ 1 domain. A Phosphoserine modification is found at serine 383. The interval 397 to 441 (NAPQALPRAPRLSQPPEQLDAHPRLPHSAHASTKPPTAPALAPPN) is disordered. PDZ domains follow at residues 461-546 (NIQL…LVFR) and 590-677 (EVPL…GMIQ). Tyrosine 489 is subject to Phosphotyrosine. A phosphoserine mark is found at serine 692, serine 695, serine 715, serine 728, serine 809, and serine 827. The interaction with PRKCI and PRKCZ stretch occupies residues 712–936 (RRISHSLYSG…AAIDKSYDKP (225 aa)). The residue at position 834 (lysine 834) is an N6-acetyllysine. A Phosphoserine modification is found at serine 837. Lysine 851 is modified (N6-acetyllysine). Phosphoserine is present on residues serine 852 and serine 873. Disordered regions lie at residues 866–888 (VDDQRAGSPNRDVGPSLGLKKSS), 932–1015 (SYDK…AKKG), 1028–1055 (KHRKDDKMEKMGRIKIQDSFTSEEDRVR), 1110–1271 (LNAR…LGGH), and 1284–1337 (LLRQ…PFYS). N6-acetyllysine is present on lysine 885. Positions 935-1337 (KPMVDDDDEG…TPEKGRPFYS (403 aa)) are interaction with FRMD4A. Residues 939 to 953 (DDDDEGMETLEEDTE) are compositionally biased toward acidic residues. Phosphoserine; by AURKA is present on serine 962. Phosphoserine occurs at positions 971 and 973. Basic and acidic residues-rich tracts occupy residues 981–1009 (DPEKRDKAEKKKDKAGKDKKKDREKEKDK) and 1030–1043 (RKDDKMEKMGRIKI). Position 1046 is a phosphoserine (serine 1046). Residues 1050 to 1082 (EEDRVRMKEEQERIQAKTREFRERQARERDYAE) adopt a coiled-coil conformation. A compositionally biased stretch (polar residues) spans 1138-1147 (PGDSNRSTPS). Residues 1148–1175 (NHDRIQRLRQEFQQAKQDEDVEDRRRTY) show a composition bias toward basic and acidic residues. 3 coiled-coil regions span residues 1149–1172 (HDRIQRLRQEFQQAKQDEDVEDRR), 1199–1222 (VQVQRQRQEERESFQQAQRQYSSL), and 1278–1299 (MLETQELLRQEQRRKEQQLKKQ). Over residues 1180-1203 (SWSSSRPASQSGRHSVSVEVQVQR) the composition is skewed to low complexity. Residues 1219–1240 (YSSLPRQSRKNASSVSQDSWEQ) are compositionally biased toward polar residues. Residues 1284–1296 (LLRQEQRRKEQQL) are compositionally biased toward basic and acidic residues. Over residues 1318–1327 (SQVARLNRLQ) the composition is skewed to polar residues. Over residues 1328–1337 (TPEKGRPFYS) the composition is skewed to basic and acidic residues. Lysine 1331 carries the N6-acetyllysine modification.

It belongs to the PAR3 family. Component of a complex whose core is composed of ARHGAP17, AMOT, PALS1, PATJ and PARD3/PAR3. Interacts (via PDZ 1 domain) with PARD6A, PARD6B and F11R/JAM1. Interacts with AURKA, AURKB and SIRT2. Interacts with PRKCI. Interacts with PRKCZ. Part of a complex with PARD6A or PARD6B, PRKCI or PRKCZ and CDC42 or RAC1. Interacts with LIMK2 and CDH5. Component of the Par polarity complex, composed of at least phosphorylated PRKCZ, PARD3 and TIAM1. Directly interacts with TIAM1 and TIAM2. Interacts with ECT2 and FBF1. Interacts (via PDZ 3 domain) with PTEN (via C-terminus). Interacts (via coiled-coil domain) with FRMD4A. Found in a complex with PARD3, CYTH1 and FRMD4A. Interacts with SAPCD2. Interacts with PRKCA. In terms of assembly, interacts with PRKCZ. Acetylated. Deacetylated by SIRT2, thereby inhibiting Schwann cell peripheral myelination. Post-translationally, phosphorylation at Ser-827 by PRKCZ and PRKCI occurs at the most apical tip of epithelial cell-cell contacts during the initial phase of tight junction formation and may promote dissociation of the complex with PARD6. EGF-induced Tyr-1127 phosphorylation mediates dissociation from LIMK2. Phosphorylation by AURKA at Ser-962 is required for the normal establishment of neuronal polarity. Isoform 1 is predominantly expressed in lung, glandular stomach, prostate, ovary and uterus. Isoform 1 is also expressed in brain, with a high expression in the cortex, hippocampus and in the striatum. Isoform 2 is predominantly expressed in intestinal epithelial cells, kidney and prostate.

Its subcellular location is the cytoplasm. It is found in the endomembrane system. It localises to the cell junction. The protein resides in the tight junction. The protein localises to the adherens junction. Its subcellular location is the cell cortex. It is found in the cytoskeleton. It localises to the cell membrane. Functionally, adapter protein involved in asymmetrical cell division and cell polarization processes. Seems to play a central role in the formation of epithelial tight junctions. Association with PARD6B may prevent the interaction of PARD3 with F11R/JAM1, thereby preventing tight junction assembly. The PARD6-PARD3 complex links GTP-bound Rho small GTPases to atypical protein kinase C proteins. Required for establishment of neuronal polarity and normal axon formation in cultured hippocampal neurons. Involved in Schwann cell peripheral myelination. Targets the phosphatase PTEN to cell junctions. This Rattus norvegicus (Rat) protein is Partitioning defective 3 homolog (Pard3).